The chain runs to 323 residues: Phosphate acetyltransferase (323 aa).

This sequence belongs to the phosphate acetyltransferase and butyryltransferase family.

It is found in the cytoplasm. The enzyme catalyses acetyl-CoA + phosphate = acetyl phosphate + CoA. The protein operates within metabolic intermediate biosynthesis; acetyl-CoA biosynthesis; acetyl-CoA from acetate: step 2/2. This Bacillus subtilis (strain 168) protein is Phosphate acetyltransferase (pta).